The following is a 264-amino-acid chain: Hydroxyethylthiazole kinase (264 aa).

Met-52 contributes to the substrate binding site. Arg-127 and Thr-173 together coordinate ATP. Gly-200 lines the substrate pocket.

The protein belongs to the Thz kinase family. Requires Mg(2+) as cofactor.

It catalyses the reaction 5-(2-hydroxyethyl)-4-methylthiazole + ATP = 4-methyl-5-(2-phosphooxyethyl)-thiazole + ADP + H(+). The protein operates within cofactor biosynthesis; thiamine diphosphate biosynthesis; 4-methyl-5-(2-phosphoethyl)-thiazole from 5-(2-hydroxyethyl)-4-methylthiazole: step 1/1. Functionally, catalyzes the phosphorylation of the hydroxyl group of 4-methyl-5-beta-hydroxyethylthiazole (THZ). The sequence is that of Hydroxyethylthiazole kinase from Pectobacterium atrosepticum (strain SCRI 1043 / ATCC BAA-672) (Erwinia carotovora subsp. atroseptica).